We begin with the raw amino-acid sequence, 239 residues long: MATFTDAEIDELFETSGTVIDSIITAQGKPVETVGRSAIPRGKTKALSSAWEKHGSVQSPASQDTPDRQDRSDKQLSTPEQVTPHDSPPATSTDQPPTQAADEAGDTQLKTGASNSLLSMLDKLSNKSSNAKKGPMVKPPGRASSTSDSTAGESTKPRKQSRETAEPGQGRPWKPGHRREHSISWTMGGVTTISWCNPSCSPIRAEPRQYSCTCGSCPATCRLCASDDVYDGGDITEGK.

Disordered stretches follow at residues 30-104 (PVET…ADEA) and 126-180 (NKSS…HRRE). Residues 65–74 (TPDRQDRSDK) are compositionally biased toward basic and acidic residues. Polar residues-rich tracts occupy residues 89–98 (PATSTDQPPT) and 143–153 (ASSTSDSTAGE). Zn(2+) is bound by residues histidine 177, cysteine 196, cysteine 200, cysteine 212, cysteine 214, cysteine 217, cysteine 221, and cysteine 224.

In terms of assembly, interacts with host STAT1. Interacts with host TXNL1. Interacts (via C-terminus) with host CacyBP; this interaction inhibits host cell apoptosis.

It is found in the host cytoplasm. The protein resides in the host nucleus. In terms of biological role, protects the virus against cell antiviral state by blocking host interferon signaling. Mechanistically, targets host phosphorylated STAT1 (phospho-STAT1) for degradation, thereby inhibiting the interferon alpha signaling pathway. Plays a role in the inhibition of host apoptosis. Interacts with and down-regulates the expression of host TXNL1. In turn, inhibits TXNL1-induced apoptosis through the BCL2-BAX-caspase 3 pathway. Inhibits host apoptosis also by negatively regulating host CacyBP/SIP. Promotes viral replication by activating the extracellular signal-regulated kinase (ERK) pathway. This is Non-structural protein V (P/V) from Gallus gallus (Chicken).